The sequence spans 543 residues: MIPNSSSSSILSLLVLLLFSTSSSWATNSIHEDFLNCLSIYKSSFPIPIYTSKNSSFNTLFRSSARNLRFLSPNSTQKPEFIITPTLESHVQTTVVCSKKHGLDLKVRSGGHDVEGLSYVSDSPYVMIDLVDFRNITVNVKNATAWIQAGSSLGEVYYKVGNESKNTLGFPAGFCPTVGVGGHISGGGFGSLVRKYGLASDQVIDARIVTVNGEILNKETMGKDLYWAIRGGGANNFGVLLSWKVKLVPVTPIVTVATIDRTLEQGATNLVHKWQFVADRLHEDVYIGLTMVTANTSRAGEKTVVAQFSFLFLGNTDRLLQIMEESFPELGLKRNDTTEMSWVESHVYFYRRGQPIEFLWDRDHLTKSFLKVKSDYVREPISKLGLEGIWKRYVGGDSPAMLWTPFGGRMNQISEFESPYPHRAGNIYNIMYVGNWLNENESEKQLNWMRSFYSYMGRYVSKNPRSAYLNYKDLDLGVNDNNVSEYIRYLKARSWGRKYFKNNFEKLVKVKSMVDPDNFFKNKQSIPPIRSWGKELEAINIVI.

The signal sequence occupies residues 1–26; it reads MIPNSSSSSILSLLVLLLFSTSSSWA. A disulfide bond links cysteine 37 and cysteine 97. Asparagine 54, asparagine 74, asparagine 135, asparagine 142, asparagine 162, asparagine 295, asparagine 335, asparagine 440, and asparagine 482 each carry an N-linked (GlcNAc...) asparagine glycan. Residues 75–250 enclose the FAD-binding PCMH-type domain; sequence STQKPEFIIT…LSWKVKLVPV (176 aa). The segment at residues 112-175 is a cross-link (6-(S-cysteinyl)-8alpha-(pros-histidyl)-FAD (His-Cys)); that stretch reads HDVEGLSYVS…NTLGFPAGFC (64 aa).

The protein belongs to the oxygen-dependent FAD-linked oxidoreductase family. Requires FAD as cofactor. Post-translationally, the FAD cofactor is bound via a bicovalent 6-S-cysteinyl, 8alpha-N1-histidyl FAD linkage.

It carries out the reaction (S)-canadine + 2 O2 + H(+) = berberine + 2 H2O2. Functionally, catalyzes the oxidation of different tetrahydroprotoberberines, such as (S)-canadine, (S)-scoulerine and (S)-tetrahydropalmatine. In Argemone mexicana (Mexican prickly poppy), this protein is Tetrahydroberberine oxidase.